The sequence spans 458 residues: Bifunctional protein GlmU (458 aa).

The segment at 1 to 230 (MENRYAIILA…FDEAMGVNDR (230 aa)) is pyrophosphorylase. Residues 9–12 (LAAG), Lys23, Gln73, and 78–79 (GT) contribute to the UDP-N-acetyl-alpha-D-glucosamine site. Asp103 lines the Mg(2+) pocket. Positions 140, 155, 170, and 228 each coordinate UDP-N-acetyl-alpha-D-glucosamine. Asn228 is a Mg(2+) binding site. The interval 231 to 251 (VALSTANKIMHRRLNEMHMRN) is linker. Residues 252-458 (GVTFIDPDTT…YAKKLPYMKD (207 aa)) form an N-acetyltransferase region. Positions 333 and 351 each coordinate UDP-N-acetyl-alpha-D-glucosamine. His363 (proton acceptor) is an active-site residue. Residues Tyr366 and Asn377 each contribute to the UDP-N-acetyl-alpha-D-glucosamine site. Acetyl-CoA contacts are provided by residues 386–387 (NY), Ser405, Ala423, and Arg440.

It in the N-terminal section; belongs to the N-acetylglucosamine-1-phosphate uridyltransferase family. In the C-terminal section; belongs to the transferase hexapeptide repeat family. As to quaternary structure, homotrimer. Requires Mg(2+) as cofactor.

The protein localises to the cytoplasm. The catalysed reaction is alpha-D-glucosamine 1-phosphate + acetyl-CoA = N-acetyl-alpha-D-glucosamine 1-phosphate + CoA + H(+). It catalyses the reaction N-acetyl-alpha-D-glucosamine 1-phosphate + UTP + H(+) = UDP-N-acetyl-alpha-D-glucosamine + diphosphate. It functions in the pathway nucleotide-sugar biosynthesis; UDP-N-acetyl-alpha-D-glucosamine biosynthesis; N-acetyl-alpha-D-glucosamine 1-phosphate from alpha-D-glucosamine 6-phosphate (route II): step 2/2. The protein operates within nucleotide-sugar biosynthesis; UDP-N-acetyl-alpha-D-glucosamine biosynthesis; UDP-N-acetyl-alpha-D-glucosamine from N-acetyl-alpha-D-glucosamine 1-phosphate: step 1/1. It participates in bacterial outer membrane biogenesis; LPS lipid A biosynthesis. Its function is as follows. Catalyzes the last two sequential reactions in the de novo biosynthetic pathway for UDP-N-acetylglucosamine (UDP-GlcNAc). The C-terminal domain catalyzes the transfer of acetyl group from acetyl coenzyme A to glucosamine-1-phosphate (GlcN-1-P) to produce N-acetylglucosamine-1-phosphate (GlcNAc-1-P), which is converted into UDP-GlcNAc by the transfer of uridine 5-monophosphate (from uridine 5-triphosphate), a reaction catalyzed by the N-terminal domain. The chain is Bifunctional protein GlmU from Enterococcus faecalis (strain ATCC 700802 / V583).